The primary structure comprises 274 residues: Orotidine 5'-phosphate decarboxylase (274 aa).

Catalysis depends on lysine 95, which acts as the Proton donor.

Belongs to the OMP decarboxylase family. Type 2 subfamily.

The catalysed reaction is orotidine 5'-phosphate + H(+) = UMP + CO2. The protein operates within pyrimidine metabolism; UMP biosynthesis via de novo pathway; UMP from orotate: step 2/2. This Verminephrobacter eiseniae (strain EF01-2) protein is Orotidine 5'-phosphate decarboxylase.